The following is a 107-amino-acid chain: Small ribosomal subunit protein bS16 (107 aa).

Residues 85 to 107 are disordered; sequence REARNNPEKAVPRKERKAAEAGK.

Belongs to the bacterial ribosomal protein bS16 family.

The sequence is that of Small ribosomal subunit protein bS16 from Rhodopseudomonas palustris (strain BisB5).